We begin with the raw amino-acid sequence, 432 residues long: Adenylosuccinate synthetase (432 aa).

Residues 13–19 (GDEGKGK) and 41–43 (GHT) each bind GTP. Asp-14 acts as the Proton acceptor in catalysis. 2 residues coordinate Mg(2+): Asp-14 and Gly-41. Residues 14-17 (DEGK), 39-42 (NAGH), Thr-130, Arg-144, Gln-225, Thr-240, and Arg-304 each bind IMP. Residue His-42 is the Proton donor of the active site. 300 to 306 (ATTGRKR) lines the substrate pocket. Residues Arg-306, 332–334 (KLD), and 415–417 (STG) each bind GTP.

The protein belongs to the adenylosuccinate synthetase family. In terms of assembly, homodimer. Mg(2+) is required as a cofactor.

Its subcellular location is the cytoplasm. It catalyses the reaction IMP + L-aspartate + GTP = N(6)-(1,2-dicarboxyethyl)-AMP + GDP + phosphate + 2 H(+). Its pathway is purine metabolism; AMP biosynthesis via de novo pathway; AMP from IMP: step 1/2. In terms of biological role, plays an important role in the de novo pathway of purine nucleotide biosynthesis. Catalyzes the first committed step in the biosynthesis of AMP from IMP. In Alteromonas mediterranea (strain DSM 17117 / CIP 110805 / LMG 28347 / Deep ecotype), this protein is Adenylosuccinate synthetase.